The primary structure comprises 96 residues: Carboxysome shell protein CsoS1A (96 aa).

The BMC domain maps to 7–92; the sequence is ALGMIETRGL…PHKEVEPVLT (86 aa).

It belongs to the bacterial microcompartments protein family. CsoS1 subfamily. Homohexamer with a small central pore. Forms a CsoS2-CsoS1-RuBisCO complex.

It localises to the carboxysome. Its function is as follows. One of shell proteins of the carboxysome, a polyhedral inclusion where RuBisCO (ribulose bisphosphate carboxylase, ccbL-ccbS) is sequestered. Assembles into hexamers which make sheets that form the facets of the polyhedral carboxysome. The shell probably limits the diffusion of CO(2) into and out of the carboxysome. This Hydrogenovibrio crunogenus (strain DSM 25203 / XCL-2) (Thiomicrospira crunogena) protein is Carboxysome shell protein CsoS1A.